The following is a 646-amino-acid chain: MKTRRGKRPERFWPSIVMNKWLNRKPKVYDFSEDEIDTEPESEDDVCSVKDVPNVHCVTDEDSHNGRRGSEADHGNNISDGGVSVRGGYQRKHRRGKSETLRAQYINTKDIKVTVATWNVAGKRPSDDLEIEDWLSTDNPSDIYIIGFQEVVPLNAGNVFGAEDRGPIPKWESIIRRTLNKSNKESVYDQSPSCNNNALHRSHSAPSSPILAQEANSIISHVMVENLVADHSLDLATNEFIDAATALPSLEPQRNPNMDWPELALDSNPQIVGSEGKLRRVFSSNATLGFKLPENPSGASRFASEARQLKRSRSFETLNLSWNDIKEEIDNRSSSSSEAEEAAKIMHDDSSDGDSSSQDEEDGDKIRNSYGLPEDLVEECRKVKDSQKYVRIVSKQMVGIYVSVWIRRRLRRHVNNLKVSPVGVGLMGYMGNKGSVSISMTLYQSRMCFVCSHLTSGHKDGAEQRRNADVYEIIRRTRFASVLDTDQPRTIPCHDQVFWFGDLNYRLNMSDGEVRKLVSQKRWDELKNSDQLIRELRRGHVFDGWREGPIKFPPTYKYEFDSDRYAGENLREPEKKRAPAWCDRILWLGKGIRQECYKRSEIRMSDHRPVTSIFNVGVEVFDHRKLQRALHVNNAAASAVHPEPSF.

Residues 59 to 74 (TDEDSHNGRRGSEADH) are compositionally biased toward basic and acidic residues. 3 disordered regions span residues 59 to 99 (TDED…GKSE), 185 to 207 (ESVYDQSPSCNNNALHRSHSAPS), and 329 to 369 (IDNR…IRNS). Polar residues predominate over residues 188–207 (YDQSPSCNNNALHRSHSAPS). The span at 341–350 (EAAKIMHDDS) shows a compositional bias: basic and acidic residues. Catalytic regions lie at residues 495 to 510 (DQVFWFGDLNYRLNMS) and 575 to 590 (KKRAPAWCDRILWLGK).

Belongs to the inositol polyphosphate 5-phosphatase family. As to expression, expressed ubiquitously.

It catalyses the reaction 1D-myo-inositol 1,4,5-trisphosphate + H2O = 1D-myo-inositol 1,4-bisphosphate + phosphate. It carries out the reaction 1D-myo-inositol 1,3,4,5-tetrakisphosphate + H2O = 1D-myo-inositol 1,3,4-trisphosphate + phosphate. Functionally, has phosphatase activity toward Ins(1,4,5)P3 and Ins(1,3,4,5)P4. Seems to be involved in the abscisic acid (ABA) signaling pathway. Could also be able to hydrolyze PtdIns(4,5)P2 and PtdIns(3,4,5)P3. The sequence is that of Type I inositol polyphosphate 5-phosphatase 2 from Arabidopsis thaliana (Mouse-ear cress).